The sequence spans 152 residues: Small ribosomal subunit protein uS13 (152 aa).

The protein belongs to the universal ribosomal protein uS13 family.

Its subcellular location is the cytoplasm. In terms of biological role, located at the top of the head of the 40S subunit, it contacts several helices of the 18S rRNA. The polypeptide is Small ribosomal subunit protein uS13 (RPS18) (Branchiostoma belcheri (Amphioxus)).